Here is a 333-residue protein sequence, read N- to C-terminus: Dihydroorotate dehydrogenase (quinone) (333 aa).

FMN is bound by residues 56-60 and Thr80; that span reads AGLDK. A substrate-binding site is contributed by Lys60. A substrate-binding site is contributed by 105-109; sequence NRMGF. Residues Asn133 and Asn166 each contribute to the FMN site. Asn166 is a binding site for substrate. The active-site Nucleophile is Ser169. Substrate is bound at residue Asn171. FMN is bound by residues Lys211 and Thr239. 240–241 serves as a coordination point for substrate; sequence NT. FMN contacts are provided by residues Gly262, Gly291, and 312 to 313; that span reads YS.

This sequence belongs to the dihydroorotate dehydrogenase family. Type 2 subfamily. In terms of assembly, monomer. Requires FMN as cofactor.

Its subcellular location is the cell membrane. The enzyme catalyses (S)-dihydroorotate + a quinone = orotate + a quinol. Its pathway is pyrimidine metabolism; UMP biosynthesis via de novo pathway; orotate from (S)-dihydroorotate (quinone route): step 1/1. In terms of biological role, catalyzes the conversion of dihydroorotate to orotate with quinone as electron acceptor. This chain is Dihydroorotate dehydrogenase (quinone), found in Legionella pneumophila (strain Lens).